A 218-amino-acid polypeptide reads, in one-letter code: MSYYDIDAILTDAEKIPCTFQIDVPDLGYLDNQPGHTLKSGSRVALPIWLAEMLAIANTGAVDMDDPSQSSKSFITFDLPPALGNDVVQALKADPRSVPLRDQSAHFYALATHMMELSEEPELSAVLRKTFVSRAAEIALHARKVGGGGSSYHGRDGGGAGGKGKGKATKDDNASNLGVGGAGEDFLRGLDEWERKLFRSAHDGTKASKEWMENVKKR.

Residues 147-163 (GGGSSYHGRDGGGAGGK) show a composition bias toward gly residues. The tract at residues 147–182 (GGGSSYHGRDGGGAGGKGKGKATKDDNASNLGVGGA) is disordered.

The protein belongs to the GINS3/PSF3 family. As to quaternary structure, component of the GINS complex which is a heterotetramer of div-26/sld5, drc-1/psf1, drc-2/psf2 and drc-3/psf3.

The protein resides in the nucleus. The GINS complex plays an essential role in the initiation of DNA replication. This Neurospora crassa (strain ATCC 24698 / 74-OR23-1A / CBS 708.71 / DSM 1257 / FGSC 987) protein is DNA replication complex GINS protein psf3 (drc-3).